A 43-amino-acid chain; its full sequence is Protein PsbN (43 aa).

The chain crosses the membrane as a helical span at residues 5–27; sequence TVFSIFISCLLLSLTGYSLYTAF.

This sequence belongs to the PsbN family.

Its subcellular location is the plastid. It is found in the chloroplast thylakoid membrane. May play a role in photosystem I and II biogenesis. In Chlorokybus atmophyticus (Soil alga), this protein is Protein PsbN.